Here is a 324-residue protein sequence, read N- to C-terminus: NADH-ubiquinone oxidoreductase chain 1 (324 aa).

Helical transmembrane passes span I5–F25, F75–L95, L106–G126, I146–F166, T177–A197, L228–F248, Q259–I279, and F299–S319.

This sequence belongs to the complex I subunit 1 family.

The protein resides in the mitochondrion inner membrane. It carries out the reaction a ubiquinone + NADH + 5 H(+)(in) = a ubiquinol + NAD(+) + 4 H(+)(out). In terms of biological role, core subunit of the mitochondrial membrane respiratory chain NADH dehydrogenase (Complex I) that is believed to belong to the minimal assembly required for catalysis. Complex I functions in the transfer of electrons from NADH to the respiratory chain. The immediate electron acceptor for the enzyme is believed to be ubiquinone. This chain is NADH-ubiquinone oxidoreductase chain 1 (MT-ND1), found in Squalus acanthias (Spiny dogfish).